The primary structure comprises 1341 residues: DNA-directed RNA polymerase subunit beta (1341 aa).

Belongs to the RNA polymerase beta chain family. The RNAP catalytic core consists of 2 alpha, 1 beta, 1 beta' and 1 omega subunit. When a sigma factor is associated with the core the holoenzyme is formed, which can initiate transcription.

The catalysed reaction is RNA(n) + a ribonucleoside 5'-triphosphate = RNA(n+1) + diphosphate. DNA-dependent RNA polymerase catalyzes the transcription of DNA into RNA using the four ribonucleoside triphosphates as substrates. This chain is DNA-directed RNA polymerase subunit beta, found in Vibrio cholerae serotype O1 (strain ATCC 39541 / Classical Ogawa 395 / O395).